We begin with the raw amino-acid sequence, 642 residues long: Threonine--tRNA ligase (642 aa).

One can recognise a TGS domain in the interval 1–61; the sequence is MPVIRFYDGS…REDAFIEFVD (61 aa). A catalytic region spans residues 243–534; sequence DHRKIGKFLQ…LIEECSGNLP (292 aa). Residues Cys334, His385, and His511 each coordinate Zn(2+).

This sequence belongs to the class-II aminoacyl-tRNA synthetase family. As to quaternary structure, homodimer. The cofactor is Zn(2+).

It is found in the cytoplasm. The enzyme catalyses tRNA(Thr) + L-threonine + ATP = L-threonyl-tRNA(Thr) + AMP + diphosphate + H(+). Functionally, catalyzes the attachment of threonine to tRNA(Thr) in a two-step reaction: L-threonine is first activated by ATP to form Thr-AMP and then transferred to the acceptor end of tRNA(Thr). Also edits incorrectly charged L-seryl-tRNA(Thr). The polypeptide is Threonine--tRNA ligase (Buchnera aphidicola subsp. Acyrthosiphon pisum (strain Tuc7)).